Here is a 926-residue protein sequence, read N- to C-terminus: Alpha-aminoadipic semialdehyde synthase, mitochondrial (926 aa).

Residues 1–27 (MLRVSRTKLGRLSPSLSRGLHHKAVMA) constitute a mitochondrion transit peptide. Positions 28 to 455 (LRREDVNAWE…DAVIASNGML (428 aa)) are lysine-ketoglutarate reductase. K48 and K56 each carry N6-acetyllysine. Position 93 is an N6-acetyllysine; alternate (K93). K93 is subject to N6-succinyllysine; alternate. K128 carries the N6-acetyllysine modification. K138 is modified (N6-acetyllysine; alternate). K138 bears the N6-succinyllysine; alternate mark. The residue at position 274 (K274) is an N6-succinyllysine. N6-acetyllysine; alternate is present on K286. At K286 the chain carries N6-succinyllysine; alternate. K333 bears the N6-succinyllysine mark. At K458 the chain carries N6-acetyllysine; alternate. Residue K458 is modified to N6-succinyllysine; alternate. The segment at 477–926 (MGTKKKVLVL…MYTTQSTIKL (450 aa)) is saccharopine dehydrogenase. Residues S488, D512, and Q516 each contribute to the NAD(+) site. 2 positions are modified to N6-acetyllysine; alternate: K523 and K535. An N6-succinyllysine; alternate mark is found at K523 and K535. 3 residues coordinate NAD(+): L554, A576, and S577. Residue 577-578 (SY) coordinates L-saccharopine. K584 is subject to N6-acetyllysine; alternate. K584 bears the N6-succinyllysine; alternate mark. 3 residues coordinate NAD(+): L603, D604, and P605. D604 contacts L-saccharopine. R703 serves as a coordination point for L-saccharopine. K707 carries the post-translational modification N6-acetyllysine. 724–726 (TLR) contributes to the L-saccharopine binding site. The residue at position 732 (K732) is an N6-succinyllysine. K739 carries the post-translational modification N6-acetyllysine. K761 bears the N6-acetyllysine; alternate mark. K761 carries the N6-succinyllysine; alternate modification. K780 carries the N6-acetyllysine modification.

The protein in the N-terminal section; belongs to the AlaDH/PNT family. This sequence in the C-terminal section; belongs to the saccharopine dehydrogenase family. In terms of assembly, homotetramer.

The protein resides in the mitochondrion. It carries out the reaction L-saccharopine + NADP(+) + H2O = L-lysine + 2-oxoglutarate + NADPH + H(+). It catalyses the reaction L-saccharopine + NAD(+) + H2O = (S)-2-amino-6-oxohexanoate + L-glutamate + NADH + H(+). Its pathway is amino-acid degradation; L-lysine degradation via saccharopine pathway; glutaryl-CoA from L-lysine: step 1/6. It functions in the pathway amino-acid degradation; L-lysine degradation via saccharopine pathway; glutaryl-CoA from L-lysine: step 2/6. In terms of biological role, bifunctional enzyme that catalyzes the first two steps in lysine degradation. This chain is Alpha-aminoadipic semialdehyde synthase, mitochondrial, found in Bos taurus (Bovine).